The sequence spans 179 residues: Large ribosomal subunit protein uL5 (179 aa).

Belongs to the universal ribosomal protein uL5 family. In terms of assembly, part of the 50S ribosomal subunit; part of the 5S rRNA/L5/L18/L25 subcomplex. Contacts the 5S rRNA and the P site tRNA. Forms a bridge to the 30S subunit in the 70S ribosome.

In terms of biological role, this is one of the proteins that bind and probably mediate the attachment of the 5S RNA into the large ribosomal subunit, where it forms part of the central protuberance. In the 70S ribosome it contacts protein S13 of the 30S subunit (bridge B1b), connecting the 2 subunits; this bridge is implicated in subunit movement. Contacts the P site tRNA; the 5S rRNA and some of its associated proteins might help stabilize positioning of ribosome-bound tRNAs. The chain is Large ribosomal subunit protein uL5 from Pelobacter propionicus (strain DSM 2379 / NBRC 103807 / OttBd1).